A 429-amino-acid polypeptide reads, in one-letter code: Serine--tRNA ligase (429 aa).

235–237 (TAE) is a binding site for L-serine. 266–268 (RSE) lines the ATP pocket. L-serine is bound at residue E289. Residue 353-356 (EISS) participates in ATP binding. An L-serine-binding site is contributed by S389.

It belongs to the class-II aminoacyl-tRNA synthetase family. Type-1 seryl-tRNA synthetase subfamily. In terms of assembly, homodimer. The tRNA molecule binds across the dimer.

It is found in the cytoplasm. The catalysed reaction is tRNA(Ser) + L-serine + ATP = L-seryl-tRNA(Ser) + AMP + diphosphate + H(+). The enzyme catalyses tRNA(Sec) + L-serine + ATP = L-seryl-tRNA(Sec) + AMP + diphosphate + H(+). Its pathway is aminoacyl-tRNA biosynthesis; selenocysteinyl-tRNA(Sec) biosynthesis; L-seryl-tRNA(Sec) from L-serine and tRNA(Sec): step 1/1. Catalyzes the attachment of serine to tRNA(Ser). Is also able to aminoacylate tRNA(Sec) with serine, to form the misacylated tRNA L-seryl-tRNA(Sec), which will be further converted into selenocysteinyl-tRNA(Sec). The polypeptide is Serine--tRNA ligase (Actinobacillus succinogenes (strain ATCC 55618 / DSM 22257 / CCUG 43843 / 130Z)).